A 235-amino-acid chain; its full sequence is Small ribosomal subunit protein eS4 (235 aa).

The 74-residue stretch at 37-110 folds into the S4 RNA-binding domain; that stretch reads LPLGLIIRDV…KGRLVLYKLN (74 aa).

The protein belongs to the eukaryotic ribosomal protein eS4 family.

This is Small ribosomal subunit protein eS4 from Methanosarcina mazei (strain ATCC BAA-159 / DSM 3647 / Goe1 / Go1 / JCM 11833 / OCM 88) (Methanosarcina frisia).